The following is a 191-amino-acid chain: Adenylate kinase (191 aa).

ATP is bound at residue 10 to 15 (AAGKGT). The segment at 30–59 (STGDMLRAAIASGSELGQRVKGVLDRGELV) is NMP. Residues threonine 31, arginine 36, 57 to 59 (ELV), 85 to 88 (GFPR), and glutamine 92 each bind AMP. The LID stretch occupies residues 126–136 (KRFEEQGRPDD). Arginine 127 lines the ATP pocket. Arginine 133 and arginine 144 together coordinate AMP. Position 172 (glycine 172) interacts with ATP.

This sequence belongs to the adenylate kinase family. As to quaternary structure, monomer.

The protein localises to the cytoplasm. It catalyses the reaction AMP + ATP = 2 ADP. Its pathway is purine metabolism; AMP biosynthesis via salvage pathway; AMP from ADP: step 1/1. Functionally, catalyzes the reversible transfer of the terminal phosphate group between ATP and AMP. Plays an important role in cellular energy homeostasis and in adenine nucleotide metabolism. The chain is Adenylate kinase from Caulobacter vibrioides (strain ATCC 19089 / CIP 103742 / CB 15) (Caulobacter crescentus).